We begin with the raw amino-acid sequence, 139 residues long: Nucleoside diphosphate kinase (139 aa).

ATP contacts are provided by Lys10, Phe58, Arg86, Thr92, Arg104, and Asn114. His117 functions as the Pros-phosphohistidine intermediate in the catalytic mechanism.

Belongs to the NDK family. In terms of assembly, homotetramer. Mg(2+) serves as cofactor.

The protein resides in the cytoplasm. The catalysed reaction is a 2'-deoxyribonucleoside 5'-diphosphate + ATP = a 2'-deoxyribonucleoside 5'-triphosphate + ADP. It catalyses the reaction a ribonucleoside 5'-diphosphate + ATP = a ribonucleoside 5'-triphosphate + ADP. Functionally, major role in the synthesis of nucleoside triphosphates other than ATP. The ATP gamma phosphate is transferred to the NDP beta phosphate via a ping-pong mechanism, using a phosphorylated active-site intermediate. This Mycolicibacterium smegmatis (strain ATCC 700084 / mc(2)155) (Mycobacterium smegmatis) protein is Nucleoside diphosphate kinase.